The primary structure comprises 208 residues: Ribonuclease HII (208 aa).

An RNase H type-2 domain is found at 18–208; it reads GFYAGVDEVG…RPVKERLEAC (191 aa). Residues aspartate 24, glutamate 25, and aspartate 116 each contribute to the a divalent metal cation site.

Belongs to the RNase HII family. Mn(2+) serves as cofactor. It depends on Mg(2+) as a cofactor.

The protein localises to the cytoplasm. The catalysed reaction is Endonucleolytic cleavage to 5'-phosphomonoester.. In terms of biological role, endonuclease that specifically degrades the RNA of RNA-DNA hybrids. The polypeptide is Ribonuclease HII (Shewanella loihica (strain ATCC BAA-1088 / PV-4)).